We begin with the raw amino-acid sequence, 33 residues long: MSDIN-like toxin proprotein 6 (33 aa).

Residues Met1–Pro10 constitute a propeptide that is removed on maturation. A cross-link (cyclopeptide (Leu-Pro)) is located at residues Leu11–Pro20. Residues Ser21–Arg33 constitute a propeptide that is removed on maturation.

It belongs to the MSDIN fungal toxin family. In terms of processing, processed by the macrocyclase-peptidase enzyme POPB to yield a toxic cyclic decapeptide. POPB first removes 10 residues from the N-terminus. Conformational trapping of the remaining peptide forces the enzyme to release this intermediate rather than proceed to macrocyclization. The enzyme rebinds the remaining peptide in a different conformation and catalyzes macrocyclization of the N-terminal 10 residues.

Probable toxin that belongs to the MSDIN-like toxin family responsible for a large number of food poisoning cases and deaths. The chain is MSDIN-like toxin proprotein 6 from Amanita phalloides (Death cap).